Consider the following 124-residue polypeptide: Large ribosomal subunit protein bL12 (124 aa).

It belongs to the bacterial ribosomal protein bL12 family. As to quaternary structure, homodimer. Part of the ribosomal stalk of the 50S ribosomal subunit. Forms a multimeric L10(L12)X complex, where L10 forms an elongated spine to which 2 to 4 L12 dimers bind in a sequential fashion. Binds GTP-bound translation factors.

Functionally, forms part of the ribosomal stalk which helps the ribosome interact with GTP-bound translation factors. Is thus essential for accurate translation. The protein is Large ribosomal subunit protein bL12 of Burkholderia mallei (strain NCTC 10247).